Reading from the N-terminus, the 475-residue chain is MLLSDLSSDQEATGSNSHGGGGGDRMVVGSHGAAHVVLSNLFLPPAAAAAATMLLPAAPVMVRPAAMAAAQEPRAKKKRSLPGNPDPEAEVIALSPRALVATNRFVCEVCNKGFQRDQNLQLHRRGHNLPWKLRHRAAAVSAVTTAAPAPRKRVYVCPEPTCVHHDPARALGDLTGIKKHFSRKHGEKRWRCERCGKRYAVHSDWKAHVKNCGTREYRCDCGILFSRKDSLLTHRAFCDALAEESARLLAAANNSSSITTTTCNNSNISSNNNNNNINSISNSNNLLITSSSSSPPLFLPFSTTPAENPNPNQLLFLQQHQAAHHQLLLPQFQQPPSSPPAYFDHLAFGGGGGVITGSSCNDDNSSIAGDVMVAAGGDSVSFGLTSEGSVTMHAGDVGRRRLTRDFLGVDHDAGEVDELELDELPADLSTTAAACQGCNFAAATTAACCATDFTTGSRQYLGRLPPVNETWSHNF.

Over residues 1–16 (MLLSDLSSDQEATGSN) the composition is skewed to polar residues. Positions 1–26 (MLLSDLSSDQEATGSNSHGGGGGDRM) are disordered. 2 consecutive C2H2-type zinc fingers follow at residues 105-127 (FVCE…RRGH) and 155-185 (YVCP…SRKH). 2 short sequence motifs (nuclear localization signal) span residues 123–130 (HRRGHNLP) and 177–184 (IKKHFSRK). The segment at 190-213 (WRCERCGKRYAVHSDWKAHVKNCG) adopts a C2H2-type 2; degenerate zinc-finger fold. Residues Cys192, Cys195, His208, Cys212, Cys219, Cys221, His234, and Cys238 each coordinate Zn(2+). The CCHC-type 2; atypical zinc finger occupies 217–240 (YRCDCGILFSRKDSLLTHRAFCDA). The tract at residues 227–239 (RKDSLLTHRAFCD) is SHR-binding.

As to expression, mostly expressed in developing leaves (more in sheaths than in blades, especially in the outer epidermal cell of immature leaves and in the region immediately beneath the meristem where internodes are visible) and panicles, and, at very low levels, around the shoot apex and in roots.

The protein localises to the nucleus. Transcription activator that acts as a flowering master switch in both long and short days, independently of the circadian clock. Promotes flowering upstream of HD1 by up-regulating FTL1, FTL4, FTL5, FTL6, EHD1, HD3A and RFT1. Seems to repress FTL11 expression. May recognize the consensus motif 5'-TTTGTCGTAAT-3' in target gene promoters. The chain is Protein EARLY HEADING DATE 2 from Oryza sativa subsp. japonica (Rice).